We begin with the raw amino-acid sequence, 146 residues long: Thyroid hormone-inducible hepatic protein (146 aa).

The tract at residues 83-104 is disordered; that stretch reads KVAGSEENGTAETEEVEDESAS. The span at 94–104 shows a compositional bias: acidic residues; that stretch reads ETEEVEDESAS.

It belongs to the SPOT14 family. As to quaternary structure, homodimer. Heterodimer with MID1IP1. Interacts with THRB and PLAGL1. Mainly expressed in tissues that synthesize triglycerides.

Its subcellular location is the nucleus. It is found in the cytoplasm. In terms of biological role, plays a role in the regulation of lipogenesis, especially in lactating mammary gland. Important for the biosynthesis of triglycerides with medium-length fatty acid chains. May modulate lipogenesis by interacting with MID1IP1 and preventing its interaction with ACACA. May function as transcriptional coactivator. May modulate the transcription factor activity of THRB. This chain is Thyroid hormone-inducible hepatic protein (THRSP), found in Homo sapiens (Human).